The sequence spans 442 residues: 4-alpha-glucanotransferase (442 aa).

The Ca(2+) site is built by Asp13, Asn15, Asp17, Val19, and Asp21. The Nucleophile role is filled by Asp186. Residue Glu216 is the Proton donor of the active site.

It belongs to the glycosyl hydrolase 13 family. As to quaternary structure, monomer. Ca(2+) is required as a cofactor.

The protein localises to the cytoplasm. It carries out the reaction Transfers a segment of a (1-&gt;4)-alpha-D-glucan to a new position in an acceptor, which may be glucose or a (1-&gt;4)-alpha-D-glucan.. Its function is as follows. Hydrolyzes the 1,4-alpha-glycoside bonds in oligomeric and polymeric 1,4-alpha-glucans and transfers oligosaccharides (maltotriose being the shortest one) to acceptor maltodextrins. In Thermotoga neapolitana, this protein is 4-alpha-glucanotransferase (mgtA).